The primary structure comprises 243 residues: MTIYPAIDIKGGRCVRLTQGRAEQETIYAQNPADVAMQFRAAGSEWVHVVDLDGAFAGEPQNLAAVQAIVAVGMKVQFGGGLRTRAAVERALALGVSRVVLGTRAAESESFVGELVQAFGDKIAVGIDAKNGKVAVKGWVATADLSTLVLARRMDTLGVATLIHTDIGTDGMLTGPNLAAQEALCSAVKSRVIASGGVSRRDDVVNLAKLAQRHANLDGVIVGKALYERRVELADLLSLAAAS.

Asp8 acts as the Proton acceptor in catalysis. Asp128 acts as the Proton donor in catalysis.

The protein belongs to the HisA/HisF family.

It localises to the cytoplasm. It catalyses the reaction 1-(5-phospho-beta-D-ribosyl)-5-[(5-phospho-beta-D-ribosylamino)methylideneamino]imidazole-4-carboxamide = 5-[(5-phospho-1-deoxy-D-ribulos-1-ylimino)methylamino]-1-(5-phospho-beta-D-ribosyl)imidazole-4-carboxamide. It functions in the pathway amino-acid biosynthesis; L-histidine biosynthesis; L-histidine from 5-phospho-alpha-D-ribose 1-diphosphate: step 4/9. The chain is 1-(5-phosphoribosyl)-5-[(5-phosphoribosylamino)methylideneamino] imidazole-4-carboxamide isomerase from Opitutus terrae (strain DSM 11246 / JCM 15787 / PB90-1).